The following is a 315-amino-acid chain: CAAX prenyl protease 2 (315 aa).

The Lumenal portion of the chain corresponds to 1–3; that stretch reads MLQ. Residues 4–23 form a helical membrane-spanning segment; that stretch reads FSTFLVLLYISISYVLPLYA. Residues 24–44 lie on the Cytoplasmic side of the membrane; it reads TSQPEGSKRDNPRTIKSRMQK. A helical transmembrane segment spans residues 45–65; sequence LTIMLISNLFLVPFLQSQLSS. The Lumenal portion of the chain corresponds to 66-74; the sequence is TTSHISFKD. Residues 75–95 traverse the membrane as a helical segment; sequence AFLGLGIIPGYYAALPNPWQF. Topologically, residues 96–105 are cytoplasmic; sequence SQFVKDLTKC. The chain crosses the membrane as a helical span at residues 106–126; sequence VAMLLTLYCGPVLDFVLYHLL. The Lumenal segment spans residues 127–148; that stretch reads NPKSSILEDFYHEFLNIWSFRN. A helical transmembrane segment spans residues 149–169; it reads FIFAPITEEIFYTSMLLTTYL. Active-site proton donor/acceptor residues include E156 and H194. Over 170–208 the chain is Cytoplasmic; that stretch reads NLIPHSQLSYQQLFWQPSLFFGLAHAHHAYEQLQEGSMT. Residues 209–229 form a helical membrane-spanning segment; it reads TVSILLTTCFQILYTTLFGGL. Over 230–237 the chain is Lumenal; sequence TKFVFVRT. Residues 238 to 258 traverse the membrane as a helical segment; sequence GGNLWCCIILHALCNIMGFPG. Over 259-275 the chain is Cytoplasmic; the sequence is PSRLNLHFTVVDKKAGR. The chain crosses the membrane as a helical span at residues 276–296; the sequence is ISKLVSIWNKCYFALLVLGLI. Topologically, residues 297–315 are lumenal; the sequence is SLKDTLQTLVGTPGYRITL.

The protein belongs to the peptidase U48 family.

The protein resides in the endoplasmic reticulum membrane. The catalysed reaction is Hydrolyzes the peptide bond -P2-(S-farnesyl or geranylgeranyl)C-P1'-P2'-P3'-COOH where P1' and P2' are amino acids with aliphatic sidechains and P3' is any C-terminal residue.. Its function is as follows. Protease involved in the processing of a variety of prenylated proteins containing the C-terminal CAAX motif, where C is a cysteine modified with an isoprenoid lipid, A is an aliphatic amino acid and X is any C-terminal amino acid. Proteolytically removes the C-terminal three residues of farnesylated proteins, leaving the prenylated cysteine as the new C-terminus. Target proteins include the a-factor mating pheromone and RAS. Its substrate specificity is overlapping but distinct with that of STE24. The protein is CAAX prenyl protease 2 (RCE1) of Saccharomyces cerevisiae (strain ATCC 204508 / S288c) (Baker's yeast).